The following is a 254-amino-acid chain: Triosephosphate isomerase (254 aa).

12-14 (NWK) is a substrate binding site. Residue histidine 99 is the Electrophile of the active site. Glutamate 169 acts as the Proton acceptor in catalysis. Residues glycine 175, serine 214, and 235-236 (GG) each bind substrate.

It belongs to the triosephosphate isomerase family. In terms of assembly, homodimer.

The protein resides in the cytoplasm. It catalyses the reaction D-glyceraldehyde 3-phosphate = dihydroxyacetone phosphate. The protein operates within carbohydrate biosynthesis; gluconeogenesis. Its pathway is carbohydrate degradation; glycolysis; D-glyceraldehyde 3-phosphate from glycerone phosphate: step 1/1. Functionally, involved in the gluconeogenesis. Catalyzes stereospecifically the conversion of dihydroxyacetone phosphate (DHAP) to D-glyceraldehyde-3-phosphate (G3P). This Bartonella quintana (strain Toulouse) (Rochalimaea quintana) protein is Triosephosphate isomerase.